Reading from the N-terminus, the 117-residue chain is Large ribosomal subunit protein bL19 (117 aa).

It belongs to the bacterial ribosomal protein bL19 family.

Functionally, this protein is located at the 30S-50S ribosomal subunit interface and may play a role in the structure and function of the aminoacyl-tRNA binding site. This is Large ribosomal subunit protein bL19 from Cutibacterium acnes (strain DSM 16379 / KPA171202) (Propionibacterium acnes).